Reading from the N-terminus, the 127-residue chain is Fluoride-specific ion channel FluC (127 aa).

The next 4 membrane-spanning stretches (helical) occupy residues 7–27 (LILI…MGLI), 37–57 (FGTL…MAMI), 69–89 (LFMI…SAEV), and 102–122 (LGIM…GVLI). Positions 77 and 80 each coordinate Na(+).

It belongs to the fluoride channel Fluc/FEX (TC 1.A.43) family.

The protein localises to the cell inner membrane. It catalyses the reaction fluoride(in) = fluoride(out). With respect to regulation, na(+) is not transported, but it plays an essential structural role and its presence is essential for fluoride channel function. Fluoride-specific ion channel. Important for reducing fluoride concentration in the cell, thus reducing its toxicity. In Mannheimia succiniciproducens (strain KCTC 0769BP / MBEL55E), this protein is Fluoride-specific ion channel FluC.